The chain runs to 229 residues: UPF0173 metal-dependent hydrolase SSP1060 (229 aa).

Belongs to the UPF0173 family.

This is UPF0173 metal-dependent hydrolase SSP1060 from Staphylococcus saprophyticus subsp. saprophyticus (strain ATCC 15305 / DSM 20229 / NCIMB 8711 / NCTC 7292 / S-41).